We begin with the raw amino-acid sequence, 457 residues long: 5' exonuclease Apollo (457 aa).

The TBM motif lies at 425 to 437 (ELPKQYLLTPLNA).

The protein belongs to the DNA repair metallo-beta-lactamase (DRMBL) family. As to quaternary structure, interacts with TERF2; the interaction is direct.

The protein resides in the chromosome. The protein localises to the telomere. It is found in the nucleus. It carries out the reaction a beta-lactam + H2O = a substituted beta-amino acid. Its function is as follows. 5'-3' exonuclease that plays a central role in telomere maintenance and protection during S-phase. Participates in the protection of telomeres against non-homologous end-joining (NHEJ)-mediated repair, thereby ensuring that telomeres do not fuse. Plays a key role in telomeric loop (T loop) formation by being recruited by TERF2 at the leading end telomeres and by processing leading-end telomeres immediately after their replication via its exonuclease activity: generates 3' single-stranded overhang at the leading end telomeres avoiding blunt leading-end telomeres that are vulnerable to end-joining reactions and expose the telomere end in a manner that activates the DNA repair pathways. May be required for DNA interstrand cross-link repair. Possesses beta-lactamase activity, catalyzing the hydrolysis of penicillin G and nitrocefin. Exhibits no activity towards other beta-lactam antibiotic classes including cephalosporins (cefotaxime) and carbapenems (imipenem). The polypeptide is 5' exonuclease Apollo (DCLRE1B) (Gallus gallus (Chicken)).